Reading from the N-terminus, the 131-residue chain is Sec-independent protein translocase protein TatB (131 aa).

Residues 2–22 (FANIGWGEMLVLVMVGLVVLG) traverse the membrane as a helical segment. Positions 90–131 (DSLFTGDFDRPTPKKPDAAGSAGPDATEQIGAGPIPFDSDAT) are disordered. Basic and acidic residues predominate over residues 96-106 (DFDRPTPKKPD).

It belongs to the TatB family. In terms of assembly, the Tat system comprises two distinct complexes: a TatABC complex, containing multiple copies of TatA, TatB and TatC subunits, and a separate TatA complex, containing only TatA subunits. Substrates initially bind to the TatABC complex, which probably triggers association of the separate TatA complex to form the active translocon.

It is found in the cell membrane. In terms of biological role, part of the twin-arginine translocation (Tat) system that transports large folded proteins containing a characteristic twin-arginine motif in their signal peptide across membranes. Together with TatC, TatB is part of a receptor directly interacting with Tat signal peptides. TatB may form an oligomeric binding site that transiently accommodates folded Tat precursor proteins before their translocation. The chain is Sec-independent protein translocase protein TatB from Mycobacterium bovis (strain ATCC BAA-935 / AF2122/97).